Here is a 588-residue protein sequence, read N- to C-terminus: Aspartate--tRNA ligase (588 aa).

Glu-172 is an L-aspartate binding site. An aspartate region spans residues 196-199 (QLFK). Arg-218 is a binding site for L-aspartate. ATP-binding positions include 218–220 (RDE) and Gln-227. L-aspartate is bound at residue His-449. Glu-483 is an ATP binding site. An L-aspartate-binding site is contributed by Arg-490. 535 to 538 (GLDR) contacts ATP.

It belongs to the class-II aminoacyl-tRNA synthetase family. Type 1 subfamily. In terms of assembly, homodimer.

It localises to the cytoplasm. It carries out the reaction tRNA(Asp) + L-aspartate + ATP = L-aspartyl-tRNA(Asp) + AMP + diphosphate. Its function is as follows. Catalyzes the attachment of L-aspartate to tRNA(Asp) in a two-step reaction: L-aspartate is first activated by ATP to form Asp-AMP and then transferred to the acceptor end of tRNA(Asp). The chain is Aspartate--tRNA ligase from Histophilus somni (strain 2336) (Haemophilus somnus).